A 312-amino-acid chain; its full sequence is MNAGILGVGKYVPEKIVTNFDLEKIMDTSDEWIRTRTGIEERRIARDDEYTHDLAYEAAKVAIKNAGLTPDDIDLFIVATVTQEATFPSVANIIQDRLGAKNAAGMDVEAACAGFTFGVVTAAQFIKTGAYKNIVVVGADKLSKITNWDDRTTAVLFGDGAGAVVMGPVSDDHGLLSFDLGSDGSGGKYLNLDENKKIYMNGREVFRFAVRQMGEASLRVLERAGLEKEDLDLLIPHQANIRIMEASRERLNLPEEKLMKTVHKYGNTSSSSIALALVDAVEEGRIKDNDNVLLVGFGGGLTWGALIIRWGK.

Active-site residues include Cys112 and His237. The interval 238–242 is ACP-binding; that stretch reads QANIR. The active site involves Asn267.

The protein belongs to the thiolase-like superfamily. FabH family. In terms of assembly, homodimer.

The protein localises to the cytoplasm. It catalyses the reaction (2S)-2-methylbutanoyl-CoA + malonyl-[ACP] + H(+) = (4S)-4-methyl-3-oxohexanoyl-[ACP] + CO2 + CoA. It carries out the reaction 2-methylpropanoyl-CoA + malonyl-[ACP] + H(+) = 4-methyl-3-oxopentanoyl-[ACP] + CO2 + CoA. The catalysed reaction is 3-methylbutanoyl-CoA + malonyl-[ACP] + H(+) = 5-methyl-3-oxohexanoyl-[ACP] + CO2 + CoA. The enzyme catalyses malonyl-[ACP] + acetyl-CoA + H(+) = 3-oxobutanoyl-[ACP] + CO2 + CoA. The protein operates within lipid metabolism; fatty acid biosynthesis. Functionally, catalyzes the condensation reaction of fatty acid synthesis by the addition to an acyl acceptor of two carbons from malonyl-ACP. Catalyzes the first condensation reaction which initiates fatty acid synthesis and may therefore play a role in governing the total rate of fatty acid production. Possesses both acetoacetyl-ACP synthase and acetyl transacylase activities. Can use branched-chain acyl-CoAs, with a preference for 2-methylbutanoyl-CoA, the precursor of odd-numbered anteiso fatty acids, at 30 degrees Celsius, which is further increased at a low temperature. Shows weak activity with acetyl-CoA. The sequence is that of Beta-ketoacyl-[acyl-carrier-protein] synthase III from Listeria monocytogenes serotype 1/2a (strain 10403S).